Consider the following 373-residue polypeptide: 3',5'-bisphosphate nucleotidase AHL (373 aa).

Residue Asp52 is the Proton acceptor of the active site. Mg(2+) contacts are provided by Glu77, Asp144, Val146, and Asp147. Thr149 (proton acceptor) is an active-site residue. Adenosine 3',5'-bisphosphate-binding residues include Thr149, Ser281, Lys284, Lys298, and Asp310. Residues Ser281, Lys284, Lys298, and Asp310 each contribute to the AMP site. Asp310 is a binding site for Mg(2+).

This sequence belongs to the inositol monophosphatase superfamily. Mg(2+) serves as cofactor. Expressed in roots, leaves, stems, flowers and siliques.

It catalyses the reaction adenosine 3',5'-bisphosphate + H2O = AMP + phosphate. The catalysed reaction is 3'-phosphoadenylyl sulfate + H2O = adenosine 5'-phosphosulfate + phosphate. With respect to regulation, inhibited by Li(+) (IC(50)=10 mM), Na(+) (IC(50)=50 mM) and Ca(2+) (IC(50)=0.06 mM). Its function is as follows. Phosphatase that converts adenosine 3'-phosphate 5'-phosphosulfate (PAPS) to adenosine 5'-phosphosulfate (APS) and 3'-phosphoadenosine 5'-phosphate (3'-PAP) to AMP. May regulate the flux of sulfur in the sulfur-activation pathway by converting PAPS to APS. Prevents both the toxicity of PAP on RNA processing enzymes as well as the product inhibition by PAP of sulfate conjugation. The polypeptide is 3',5'-bisphosphate nucleotidase AHL (Arabidopsis thaliana (Mouse-ear cress)).